The chain runs to 735 residues: Capsid protein (735 aa).

2 disordered regions span residues 577–604 and 632–695; these read VVRN…DPKY and QQAS…TVEQ. Residues 649 to 666 are compositionally biased toward basic and acidic residues; the sequence is EIKGLTEADQEAEKDSGL. The span at 676–685 shows a compositional bias: low complexity; it reads SSQETQSEQE.

Belongs to the anelloviridae capsid protein family.

It localises to the virion. In terms of biological role, self assemble to form an icosahedral capsid. This chain is Capsid protein, found in Pan troglodytes (Chimpanzee).